The primary structure comprises 134 residues: Large ribosomal subunit protein bL20 (134 aa).

Belongs to the bacterial ribosomal protein bL20 family.

Binds directly to 23S ribosomal RNA and is necessary for the in vitro assembly process of the 50S ribosomal subunit. It is not involved in the protein synthesizing functions of that subunit. The protein is Large ribosomal subunit protein bL20 of Rhizobium etli (strain ATCC 51251 / DSM 11541 / JCM 21823 / NBRC 15573 / CFN 42).